The chain runs to 458 residues: UDP-N-acetylmuramate--L-alanine ligase (458 aa).

Position 118-124 (118-124 (GTHGKTT)) interacts with ATP.

Belongs to the MurCDEF family.

It is found in the cytoplasm. It catalyses the reaction UDP-N-acetyl-alpha-D-muramate + L-alanine + ATP = UDP-N-acetyl-alpha-D-muramoyl-L-alanine + ADP + phosphate + H(+). It participates in cell wall biogenesis; peptidoglycan biosynthesis. In terms of biological role, cell wall formation. The sequence is that of UDP-N-acetylmuramate--L-alanine ligase from Clostridium botulinum (strain Loch Maree / Type A3).